The chain runs to 486 residues: Glucose-6-phosphate 1-dehydrogenase (486 aa).

NADP(+)-binding positions include 13–20 (GGTGDLAK), Arg47, 86–87 (DV), and Lys149. Residues His179, Lys183, Glu217, and Asp236 each coordinate substrate. The Proton acceptor role is filled by His241. Substrate contacts are provided by Lys339 and Lys344.

It belongs to the glucose-6-phosphate dehydrogenase family. As to quaternary structure, homodimer.

It carries out the reaction D-glucose 6-phosphate + NAD(+) = 6-phospho-D-glucono-1,5-lactone + NADH + H(+). The catalysed reaction is D-glucose 6-phosphate + NADP(+) = 6-phospho-D-glucono-1,5-lactone + NADPH + H(+). It participates in carbohydrate degradation; pentose phosphate pathway; D-ribulose 5-phosphate from D-glucose 6-phosphate (oxidative stage): step 1/3. In terms of biological role, catalyzes the oxidation of glucose 6-phosphate to 6-phosphogluconolactone. Can utilize either NADP(+) or NAD(+). The protein is Glucose-6-phosphate 1-dehydrogenase of Leuconostoc mesenteroides.